Reading from the N-terminus, the 278-residue chain is Complement C1q tumor necrosis factor-related protein 6 (278 aa).

An N-terminal signal peptide occupies residues 1-46; that stretch reads MQWLRVRESPGEATGHRVTMGTAALGPVWAALLLFLLMCEIPMVEL. The N-linked (GlcNAc...) asparagine glycan is linked to N91. The Collagen-like domain occupies 97–138; that stretch reads GDKGDPGPMGLPGYMGREGPQGEPGPQGSKGDKGEMGSPGAP. Residues 99–135 form a disordered region; that stretch reads KGDPGPMGLPGYMGREGPQGEPGPQGSKGDKGEMGSP. The C1q domain occupies 139–259; sequence CQKRFFAFSV…KRQRENAIYS (121 aa).

It localises to the secreted. The polypeptide is Complement C1q tumor necrosis factor-related protein 6 (C1QTNF6) (Homo sapiens (Human)).